A 370-amino-acid chain; its full sequence is DNA replication and repair protein RecF (370 aa).

30–37 (GQNGMGKT) lines the ATP pocket.

Belongs to the RecF family.

It localises to the cytoplasm. Functionally, the RecF protein is involved in DNA metabolism; it is required for DNA replication and normal SOS inducibility. RecF binds preferentially to single-stranded, linear DNA. It also seems to bind ATP. This Bacteroides fragilis (strain ATCC 25285 / DSM 2151 / CCUG 4856 / JCM 11019 / LMG 10263 / NCTC 9343 / Onslow / VPI 2553 / EN-2) protein is DNA replication and repair protein RecF.